A 2130-amino-acid chain; its full sequence is Highly reducing polyketide synthase anuA (2130 aa).

The 213-residue stretch at 1–213 (MKAGVLSGTS…GANCHVILEQ (213 aa)) folds into the Ketosynthase family 3 (KS3) domain. One can recognise a Malonyl-CoA:ACP transacylase (MAT) domain in the interval 317–644 (FVFTGQGSQW…SFAGNLWLKG (328 aa)). Positions 701–836 (HELLGSLLTG…GSIAIHPRNA (136 aa)) are N-terminal hotdog fold. Positions 701–1000 (HELLGSLLTG…LSPYQSTSQA (300 aa)) constitute a PKS/mFAS DH domain. The Proton acceptor; for dehydratase activity role is filled by His-733. The tract at residues 849-1000 (LESTAKRTWY…LSPYQSTSQA (152 aa)) is C-terminal hotdog fold. Asp-914 acts as the Proton donor; for dehydratase activity in catalysis. One can recognise an Enoyl reductase (ER) domain in the interval 1405–1722 (GQLDTIYFQQ…SRSRIGKVAI (318 aa)). A Ketoreductase (KR) domain is found at 1747 to 1927 (SYVMVGCLGG…AVAVGLGMIS (181 aa)). The region spanning 2047–2125 (TLDEAVLDHI…SLRDLAMTSL (79 aa)) is the Carrier domain. O-(pantetheine 4'-phosphoryl)serine is present on Ser-2084.

The cofactor is pantetheine 4'-phosphate.

It functions in the pathway secondary metabolite biosynthesis. Functionally, highly reducing polyketide synthase; part of the gene cluster that mediates the biosynthesis of annullatin D, an alkylated aromatic polyketide with a fused dihydrobenzofuran lactone ring system that exhibits potent agonistic activities toward the cannabinoid receptors. The annullatin backbone 2-hydroxymethyl-3-pentylphenol is assembled from one acetyl-CoA starter unit and 5 malonyl-CoA elongation units by cooperation of the highly reducing polyketide synthase anuA, the short-chain dehydrogenase anuB and the oxidoreductase anuC, before being hydroxylated at the C-5 alkyl chain by the cytochrome P450 monooxygenase anuE to form (8S)-annullatin E. The prenyltransferase anuH subsequently installs one isoprenyl group at the benzene ring to form (8S)-annullatin J. Enzymatic or nonenzymatic dihydro-benzofuran ring formation between the prenyl and the phenolic hydroxyl groups in (8S)-annullatin J results in two diastereomers (2S,9S)-annullatin H and compound 12. The intermediate (2S,9S)-annullatin H is then converted to (2S,9S)-annullatin D by the FAD-linked oxidoreductase anuG-catalyzed five-member lactone ring formation. The isomer 12 acts as a substrate for the short-chain dehydrogenase anuF and is oxidized to (2R)-annullatin F, which is subsequently acetylated by an acetyltransferase leading to (2R)-annullatin G formation. The remaining enzymes identified within the cluster, anuD, anuI and anuJ, seem not to be involved in annullatin biosynthesis. This chain is Highly reducing polyketide synthase anuA, found in Penicillium roqueforti (strain FM164).